The chain runs to 629 residues: Putative polypeptide N-acetylgalactosaminyltransferase 10 (629 aa).

At 1–12 (MGLSRYLSRRHH) the chain is on the cytoplasmic side. Residues 13 to 33 (WVIQYCALLLFLYFIYSYVAV) form a helical; Signal-anchor for type II membrane protein membrane-spanning segment. Over 34–629 (SNDAPRLNEE…RQANEHKELE (596 aa)) the chain is Lumenal. N-linked (GlcNAc...) asparagine glycosylation is found at N143 and N177. 5 disulfides stabilise this stretch: C154–C385, C376–C454, C493–C510, C539–C556, and C582–C598. Residues 163-275 (LPTVSVIFPF…YNWLPPLLDP (113 aa)) are catalytic subdomain A. Substrate-binding residues include D204 and R236. Mn(2+) is bound by residues D259 and H261. The interval 331–393 (PFDSPVMAGG…PCSRVAHIYR (63 aa)) is catalytic subdomain B. W362 lines the substrate pocket. A Mn(2+)-binding site is contributed by H390. R393 is a binding site for substrate. The segment at 393–406 (RCKYAPFKNAGMGD) is flexible loop. Residues 526–629 (TRWHDIRPKG…RQANEHKELE (104 aa)) enclose the Ricin B-type lectin domain.

It belongs to the glycosyltransferase 2 family. GalNAc-T subfamily. The cofactor is Mn(2+).

The protein localises to the golgi apparatus membrane. The enzyme catalyses L-seryl-[protein] + UDP-N-acetyl-alpha-D-galactosamine = a 3-O-[N-acetyl-alpha-D-galactosaminyl]-L-seryl-[protein] + UDP + H(+). It catalyses the reaction L-threonyl-[protein] + UDP-N-acetyl-alpha-D-galactosamine = a 3-O-[N-acetyl-alpha-D-galactosaminyl]-L-threonyl-[protein] + UDP + H(+). Its pathway is protein modification; protein glycosylation. Functionally, may catalyze the initial reaction in O-linked oligosaccharide biosynthesis, the transfer of an N-acetyl-D-galactosamine residue to a serine or threonine residue on the protein receptor. The polypeptide is Putative polypeptide N-acetylgalactosaminyltransferase 10 (Caenorhabditis briggsae).